The following is a 214-amino-acid chain: Thymidylate kinase (214 aa).

An ATP-binding site is contributed by 10-17 (GPDGAGKT).

Belongs to the thymidylate kinase family.

The enzyme catalyses dTMP + ATP = dTDP + ADP. Functionally, phosphorylation of dTMP to form dTDP in both de novo and salvage pathways of dTTP synthesis. The protein is Thymidylate kinase of Levilactobacillus brevis (strain ATCC 367 / BCRC 12310 / CIP 105137 / JCM 1170 / LMG 11437 / NCIMB 947 / NCTC 947) (Lactobacillus brevis).